A 138-amino-acid polypeptide reads, in one-letter code: Acidic phospholipase A2 VP7 (138 aa).

An N-terminal signal peptide occupies residues 1–16 (MRTLWIVAVCLMGVEG). Cystine bridges form between Cys42-Cys131, Cys44-Cys60, Cys59-Cys111, Cys65-Cys138, Cys66-Cys104, Cys73-Cys97, and Cys91-Cys102. Residues Tyr43, Gly45, and Gly47 each coordinate Ca(2+). Residue His63 is part of the active site. Asp64 provides a ligand contact to Ca(2+). Asp105 is an active-site residue.

Belongs to the phospholipase A2 family. Group II subfamily. D49 sub-subfamily. As to quaternary structure, does not form a complex. Ca(2+) serves as cofactor. As to expression, expressed by the venom gland.

It is found in the secreted. The catalysed reaction is a 1,2-diacyl-sn-glycero-3-phosphocholine + H2O = a 1-acyl-sn-glycero-3-phosphocholine + a fatty acid + H(+). Functionally, snake venom phospholipase A2 (PLA2) that is not toxic by itself, but the synergistical mixture of a basic and this acidic protein is lethal. PLA2 catalyzes the calcium-dependent hydrolysis of the 2-acyl groups in 3-sn-phosphoglycerides. This Daboia palaestinae (Palestine viper) protein is Acidic phospholipase A2 VP7.